The chain runs to 258 residues: Protein SAWADEE HOMEODOMAIN HOMOLOG 1 (258 aa).

The tract at residues Ala138–Glu244 is SAWADEE domain. Zn(2+)-binding residues include Cys191, His225, Cys230, and Cys232.

As to quaternary structure, associates with the RNA polymerase IV (Pol IV) complex. Interacts with NRPD1, NRPD2, NRPD3, NRPD3B, CLSY1 and CLSY2.

The protein localises to the nucleus. In terms of biological role, involved in RNA-directed DNA methylation (RdDM). Required for the silencing of some endogenous RdDM targets and accumulation of 24-nt siRNAs, but not for the production of Pol V-dependent transcripts. Functions in transcriptional silencing through both DNA methylation-dependent and -independent pathways. Required for both maintenance and de-novo DNA methylation. Plays a role in the recruitment of Pol IV to genomic regions associated with K9 methylated histone H3 that are targets for RdDM. This chain is Protein SAWADEE HOMEODOMAIN HOMOLOG 1 (SHH1), found in Arabidopsis thaliana (Mouse-ear cress).